Reading from the N-terminus, the 229-residue chain is DNA mismatch repair protein MutH (229 aa).

The protein belongs to the MutH family.

Its subcellular location is the cytoplasm. Its function is as follows. Sequence-specific endonuclease that cleaves unmethylated GATC sequences. It is involved in DNA mismatch repair. The chain is DNA mismatch repair protein MutH from Escherichia coli O6:K15:H31 (strain 536 / UPEC).